Reading from the N-terminus, the 223-residue chain is UPF0441 protein KPN78578_33850 (223 aa).

The tract at residues 165–223 is disordered; sequence SYGAAQPGRTMNVPKTAMAPKPATTTTVTRGGFGESVAKQSTMQRSAAGSTSSSRSMGG. Composition is skewed to low complexity over residues 177-193 and 209-223; these read VPKT…TTVT and RSAA…SMGG.

Belongs to the UPF0441 family.

This chain is UPF0441 protein KPN78578_33850, found in Klebsiella pneumoniae subsp. pneumoniae (strain ATCC 700721 / MGH 78578).